We begin with the raw amino-acid sequence, 345 residues long: MSTARLKINLDALAINWRNLDAKTNCETAAVVKANGYGLESGRVGKALAQAGARNFFVAIAEEGIALRRALGPGPGISVFAGHMEGDAKLLRDFQLTPMLNSLDQMLRHFESLPGHPFGVQLDSGMNRLGMEAAEWMAVRDIALDQNPVLLMSHLACSDEPGHGMNAYQLKNFIEMTEGLNIPRSLAATGGLLLGRDYHFDLCRPGIGLYGGAPYADALPVVELEVPVIQVRDLAPGESVGYGNTWIAQRDSKIATIAGGYADGLHRAFQRQGIMAYAGGTPCPVVGRISMDLITVDVTDLAEVPPYLSLMNETQTVDVLANAADTIGYEVLTSLGNRYARTYSA.

Lysine 33 (proton acceptor; specific for D-alanine) is an active-site residue. Lysine 33 is subject to N6-(pyridoxal phosphate)lysine. Arginine 128 contacts substrate. The active-site Proton acceptor; specific for L-alanine is the tyrosine 242. Residue methionine 291 participates in substrate binding.

The protein belongs to the alanine racemase family. The cofactor is pyridoxal 5'-phosphate.

It carries out the reaction L-alanine = D-alanine. The protein operates within amino-acid biosynthesis; D-alanine biosynthesis; D-alanine from L-alanine: step 1/1. Its function is as follows. Catalyzes the interconversion of L-alanine and D-alanine. May also act on other amino acids. The polypeptide is Alanine racemase (alr) (Ruegeria sp. (strain TM1040) (Silicibacter sp.)).